A 345-amino-acid chain; its full sequence is Adenylosuccinate synthetase (345 aa).

Residues 18-24 (GDEGKGK) and 48-50 (GHT) each bind GTP. Aspartate 19 (proton acceptor) is an active-site residue. Mg(2+)-binding residues include aspartate 19 and glycine 48. IMP is bound by residues 19-22 (DEGK), 46-49 (NAGH), threonine 133, arginine 147, glutamine 185, threonine 200, and arginine 262. Histidine 49 serves as the catalytic Proton donor. 258–264 (TVTGRRR) lines the substrate pocket. Residues arginine 264, 290-292 (GLD), and 330-332 (STG) contribute to the GTP site.

It belongs to the adenylosuccinate synthetase family. In terms of assembly, homodimer. The cofactor is Mg(2+).

The protein localises to the cytoplasm. It catalyses the reaction IMP + L-aspartate + GTP = N(6)-(1,2-dicarboxyethyl)-AMP + GDP + phosphate + 2 H(+). Its pathway is purine metabolism; AMP biosynthesis via de novo pathway; AMP from IMP: step 1/2. Its function is as follows. Plays an important role in the de novo pathway of purine nucleotide biosynthesis. Catalyzes the first committed step in the biosynthesis of AMP from IMP. The polypeptide is Adenylosuccinate synthetase (Methanocaldococcus jannaschii (strain ATCC 43067 / DSM 2661 / JAL-1 / JCM 10045 / NBRC 100440) (Methanococcus jannaschii)).